A 271-amino-acid polypeptide reads, in one-letter code: Formamidopyrimidine-DNA glycosylase (271 aa).

Pro2 serves as the catalytic Schiff-base intermediate with DNA. Glu3 (proton donor) is an active-site residue. The active-site Proton donor; for beta-elimination activity is Lys56. 3 residues coordinate DNA: His89, Arg107, and Arg151. The FPG-type zinc finger occupies 236 to 270; the sequence is MVYARQGQPCRVCATPIKSLRQGQRSTFYCPHCQK. The active-site Proton donor; for delta-elimination activity is Arg260.

The protein belongs to the FPG family. Monomer. Zn(2+) is required as a cofactor.

The enzyme catalyses Hydrolysis of DNA containing ring-opened 7-methylguanine residues, releasing 2,6-diamino-4-hydroxy-5-(N-methyl)formamidopyrimidine.. It carries out the reaction 2'-deoxyribonucleotide-(2'-deoxyribose 5'-phosphate)-2'-deoxyribonucleotide-DNA = a 3'-end 2'-deoxyribonucleotide-(2,3-dehydro-2,3-deoxyribose 5'-phosphate)-DNA + a 5'-end 5'-phospho-2'-deoxyribonucleoside-DNA + H(+). Functionally, involved in base excision repair of DNA damaged by oxidation or by mutagenic agents. Acts as a DNA glycosylase that recognizes and removes damaged bases. Has a preference for oxidized purines, such as 7,8-dihydro-8-oxoguanine (8-oxoG). Has AP (apurinic/apyrimidinic) lyase activity and introduces nicks in the DNA strand. Cleaves the DNA backbone by beta-delta elimination to generate a single-strand break at the site of the removed base with both 3'- and 5'-phosphates. The protein is Formamidopyrimidine-DNA glycosylase of Albidiferax ferrireducens (strain ATCC BAA-621 / DSM 15236 / T118) (Rhodoferax ferrireducens).